The following is a 59-amino-acid chain: Large ribosomal subunit protein bL33 (59 aa).

The protein belongs to the bacterial ribosomal protein bL33 family.

The protein is Large ribosomal subunit protein bL33 of Borrelia turicatae (strain 91E135).